The primary structure comprises 217 residues: Non-structural protein NS3 (217 aa).

The protein belongs to the orbivirus NS3 family.

Its function is as follows. May play a role in the release of virions from infected cells. The protein is Non-structural protein NS3 (Segment-10) of African horse sickness virus 6 (AHSV-6).